Here is a 260-residue protein sequence, read N- to C-terminus: Scytalidopepsin B (260 aa).

The first 20 residues, methionine 1 to alanine 20, serve as a signal peptide directing secretion. Positions alanine 21 to alanine 54 are excised as a propeptide. The cysteines at positions 101 and 181 are disulfide-linked. Glutamate 190 acts as the Proton acceptor in catalysis. 2 disulfides stabilise this stretch: cysteine 195–cysteine 219 and cysteine 248–cysteine 257.

It belongs to the peptidase G1 family. Monomer.

It catalyses the reaction Hydrolysis of proteins with broad specificity, cleaving 24-Phe-|-Phe-25, but not 15-Leu-|-Tyr-16 and 25-Phe-|-Tyr-26 in the B chain of insulin.. This chain is Scytalidopepsin B, found in Scytalidium lignicola (Hyphomycete).